Here is a 559-residue protein sequence, read N- to C-terminus: 2-succinyl-5-enolpyruvyl-6-hydroxy-3-cyclohexene-1-carboxylate synthase (559 aa).

This sequence belongs to the TPP enzyme family. MenD subfamily. In terms of assembly, homodimer. Mg(2+) is required as a cofactor. It depends on Mn(2+) as a cofactor. Thiamine diphosphate serves as cofactor.

It carries out the reaction isochorismate + 2-oxoglutarate + H(+) = 5-enolpyruvoyl-6-hydroxy-2-succinyl-cyclohex-3-ene-1-carboxylate + CO2. The protein operates within quinol/quinone metabolism; 1,4-dihydroxy-2-naphthoate biosynthesis; 1,4-dihydroxy-2-naphthoate from chorismate: step 2/7. It functions in the pathway quinol/quinone metabolism; menaquinone biosynthesis. Its function is as follows. Catalyzes the thiamine diphosphate-dependent decarboxylation of 2-oxoglutarate and the subsequent addition of the resulting succinic semialdehyde-thiamine pyrophosphate anion to isochorismate to yield 2-succinyl-5-enolpyruvyl-6-hydroxy-3-cyclohexene-1-carboxylate (SEPHCHC). The polypeptide is 2-succinyl-5-enolpyruvyl-6-hydroxy-3-cyclohexene-1-carboxylate synthase (Cytophaga hutchinsonii (strain ATCC 33406 / DSM 1761 / CIP 103989 / NBRC 15051 / NCIMB 9469 / D465)).